Here is a 521-residue protein sequence, read N- to C-terminus: Calcium-dependent protein kinase 33 (521 aa).

Gly-2 carries the N-myristoyl glycine lipid modification. A disordered region spans residues 15 to 56; sequence PQQNGERSVEIENRRRSTHQDPSKISTGTNQPPPWRNPAKHS. Over residues 21–36 the composition is skewed to basic and acidic residues; that stretch reads RSVEIENRRRSTHQDP. Positions 73 to 331 constitute a Protein kinase domain; the sequence is YTLSKELGRG…AAEVLKHPWL (259 aa). Residues 79–87 and Lys-102 contribute to the ATP site; that span reads LGRGQFGVT. Asp-197 (proton acceptor) is an active-site residue. Phosphoserine is present on Ser-237. Residues 337–367 form an autoinhibitory domain region; sequence ASDKPIDSAVLSRMKQFRAMNKLKKLALKVI. 4 consecutive EF-hand domains span residues 374-409, 410-445, 446-481, and 482-516; these read EEIQ…LGSR, LTEA…RHRL, ESNE…YGMG, and DDAT…GNPQ. The Ca(2+) site is built by Asp-387, Asp-389, Ser-391, Thr-393, Glu-398, Asp-423, Asp-425, Asn-427, Ser-429, Glu-434, Asp-459, Asp-461, Ser-463, Tyr-465, Glu-470, Asp-494, Asp-496, Asp-498, Arg-500, and Glu-505.

Belongs to the protein kinase superfamily. Ser/Thr protein kinase family. CDPK subfamily. Interacts with THI1. Interacts with FD and FDP. In terms of processing, autophosphorylated. As to expression, expressed in primary roots, leaves, inflorescences, siliques and guard cells. Expressed in the shoot apical meristem.

It localises to the cell membrane. It is found in the nucleus. The protein resides in the cytoplasm. It carries out the reaction L-seryl-[protein] + ATP = O-phospho-L-seryl-[protein] + ADP + H(+). It catalyses the reaction L-threonyl-[protein] + ATP = O-phospho-L-threonyl-[protein] + ADP + H(+). Activated by calcium. Autophosphorylation may play an important role in the regulation of the kinase activity. Repressed by THI1 through a negative regulation of the autophosphorylation activity in the presence of Ca(2+). Its function is as follows. Ca(2+)-dependent protein kinase. Negative regulator of stomatal closure and slow anion currents. Unable to phosphorylate THI1 in vitro, but the kinase activity is essential for the stomatal closure regulation. Phosphorylates FD. May play a role in signal transduction pathways that involve calcium as a second messenger. This chain is Calcium-dependent protein kinase 33, found in Arabidopsis thaliana (Mouse-ear cress).